Consider the following 155-residue polypeptide: Small ribosomal subunit protein uS7 (155 aa).

It belongs to the universal ribosomal protein uS7 family. Part of the 30S ribosomal subunit. Contacts proteins S9 and S11.

Its function is as follows. One of the primary rRNA binding proteins, it binds directly to 16S rRNA where it nucleates assembly of the head domain of the 30S subunit. Is located at the subunit interface close to the decoding center, probably blocks exit of the E-site tRNA. This is Small ribosomal subunit protein uS7 from Chlorobium chlorochromatii (strain CaD3).